Consider the following 180-residue polypeptide: Alkyl hydroperoxide reductase AhpD (180 aa).

Cysteine 131 (proton donor) is an active-site residue. Cysteines 131 and 134 form a disulfide. Cysteine 134 functions as the Cysteine sulfenic acid (-SOH) intermediate in the catalytic mechanism.

Belongs to the AhpD family.

The catalysed reaction is N(6)-[(R)-dihydrolipoyl]-L-lysyl-[lipoyl-carrier protein] + a hydroperoxide = N(6)-[(R)-lipoyl]-L-lysyl-[lipoyl-carrier protein] + an alcohol + H2O. In terms of biological role, antioxidant protein with alkyl hydroperoxidase activity. Required for the reduction of the AhpC active site cysteine residues and for the regeneration of the AhpC enzyme activity. This is Alkyl hydroperoxide reductase AhpD from Beijerinckia indica subsp. indica (strain ATCC 9039 / DSM 1715 / NCIMB 8712).